Reading from the N-terminus, the 565-residue chain is Arginine--tRNA ligase (565 aa).

The 'HIGH' region signature appears at 128–138 (ANPTGPLHVGH).

It belongs to the class-I aminoacyl-tRNA synthetase family. In terms of assembly, monomer.

It localises to the cytoplasm. The enzyme catalyses tRNA(Arg) + L-arginine + ATP = L-arginyl-tRNA(Arg) + AMP + diphosphate. The protein is Arginine--tRNA ligase of Delftia acidovorans (strain DSM 14801 / SPH-1).